Reading from the N-terminus, the 88-residue chain is Acyl carrier protein (88 aa).

The Carrier domain occupies 4-79; the sequence is DSVPAKVMEI…AAVDYIQNKM (76 aa). Ser39 bears the O-(pantetheine 4'-phosphoryl)serine mark.

Belongs to the acyl carrier protein (ACP) family. Post-translationally, 4'-phosphopantetheine is transferred from CoA to a specific serine of apo-ACP by AcpS. This modification is essential for activity because fatty acids are bound in thioester linkage to the sulfhydryl of the prosthetic group.

The protein localises to the cytoplasm. Its pathway is lipid metabolism; fatty acid biosynthesis. Carrier of the growing fatty acid chain in fatty acid biosynthesis. The polypeptide is Acyl carrier protein (Trichodesmium erythraeum (strain IMS101)).